The chain runs to 300 residues: Ribosomal protein L11 methyltransferase (300 aa).

S-adenosyl-L-methionine-binding residues include Thr152, Gly173, Asp195, and Asn234.

This sequence belongs to the methyltransferase superfamily. PrmA family.

Its subcellular location is the cytoplasm. It catalyses the reaction L-lysyl-[protein] + 3 S-adenosyl-L-methionine = N(6),N(6),N(6)-trimethyl-L-lysyl-[protein] + 3 S-adenosyl-L-homocysteine + 3 H(+). In terms of biological role, methylates ribosomal protein L11. The polypeptide is Ribosomal protein L11 methyltransferase (Burkholderia cenocepacia (strain HI2424)).